The primary structure comprises 1209 residues: Protein phosphatase 1 regulatory subunit 26 (1209 aa).

Disordered regions lie at residues Asp57–Lys91, Ser145–Gly279, Lys291–Ser471, Gly501–Asp532, Gly555–Asp694, Glu733–Ser836, Lys848–Gln1033, Arg1052–Ser1072, and Ala1118–Val1209. The span at Thr63–Lys91 shows a compositional bias: basic and acidic residues. A compositionally biased stretch (low complexity) spans Gln201–Asp219. Over residues Ile226–Thr255 the composition is skewed to basic and acidic residues. A compositionally biased stretch (polar residues) spans Gln301–Pro321. The span at Ser352–Ser362 shows a compositional bias: low complexity. Basic and acidic residues predominate over residues Asp442 to Lys454. 3 stretches are compositionally biased toward basic and acidic residues: residues Lys609–Leu637, Lys667–Ser685, and Ser757–Gly766. Composition is skewed to low complexity over residues Pro821–Ser836 and Ser852–Glu861. Residue Ser1161 is modified to Phosphoserine. The span at Gly1187 to Val1209 shows a compositional bias: low complexity.

Interacts with UTP20 and PPP1CA. In terms of tissue distribution, ubiquitous in normal tissues. Expressed in numerous adenocarcinoma cell lines.

Its subcellular location is the nucleus. The protein localises to the nucleolus. Its function is as follows. Inhibits phosphatase activity of protein phosphatase 1 (PP1) complexes. May positively regulate cell proliferation. The chain is Protein phosphatase 1 regulatory subunit 26 (PPP1R26) from Homo sapiens (Human).